The primary structure comprises 307 residues: MQDIHDFSMNGVGGGGGGGGRFFGGGIGGGGGGDRRMRAHQNNILNHHQSLKCPRCNSLNTKFCYYNNYNLSQPRHFCKNCRRYWTKGGVLRNVPVGGGCRKAKRSKTKQVPSSSSADKPTTTQDDHHVEEKSSTGSHSSSESSSLTASNSTTVAAVSVTAAAEVASSVIPGFDMPNMKIYGNGIEWSTLLGQGSSAGGVFSEIGGFPAVSAIETTPFGFGGKFVNQDDHLKLEGETVQQQQFGDRTAQVEFQGRSSDPNMGFEPLDWGSGGGDQTLFDLTSTVDHAYWSQSQWTSSDQDQSGLYLP.

The Dof-type zinc finger occupies 51–105; the sequence is LKCPRCNSLNTKFCYYNNYNLSQPRHFCKNCRRYWTKGGVLRNVPVGGGCRKAKR. Residues Cys53, Cys56, Cys78, and Cys81 each coordinate Zn(2+). Residues 96–147 are disordered; the sequence is VGGGCRKAKRSKTKQVPSSSSADKPTTTQDDHHVEEKSSTGSHSSSESSSLT. The segment covering 109-123 has biased composition (polar residues); the sequence is KQVPSSSSADKPTTT. The segment covering 124-133 has biased composition (basic and acidic residues); that stretch reads QDDHHVEEKS. Low complexity predominate over residues 134–147; sequence STGSHSSSESSSLT.

It is found in the nucleus. Transcription factor that binds specifically to a 5'-AA[AG]G-3' consensus core sequence. Enhances the DNA binding of OBF transcription factors to OCS elements. This chain is Dof zinc finger protein DOF5.4 (DOF5.4), found in Arabidopsis thaliana (Mouse-ear cress).